The chain runs to 574 residues: Transmembrane glycoprotein NMB (574 aa).

The signal sequence occupies residues 1 to 22 (MESLCGVLGFLLLAAGLPLQAA). Topologically, residues 23 to 502 (KRFRDVLGHE…DPDSPLRAVN (480 aa)) are extracellular. Residues asparagine 93, asparagine 134, asparagine 200, asparagine 249, asparagine 275, asparagine 296, asparagine 300, asparagine 306, and asparagine 312 are each glycosylated (N-linked (GlcNAc...) asparagine). The PKD domain maps to 250–338 (LSDEIFLRDL…STPPPPSTPP (89 aa)). The interval 320–353 (PGPCPPPSPSTPPPPSTPPSPPPSPLPTLSTPSP) is disordered. A compositionally biased stretch (pro residues) spans 321–345 (GPCPPPSPSTPPPPSTPPSPPPSPL). 2 N-linked (GlcNAc...) asparagine glycosylation sites follow: asparagine 463 and asparagine 471. The helical transmembrane segment at 503-523 (GVLISIGCLAVLVTMVTILLY) threads the bilayer. The Cytoplasmic segment spans residues 524–574 (KKHKAYKPIGNCPRNTVKGKGLSVLLSHAKAPFFRGDQEKDPLLQDKPRTL). At serine 546 the chain carries Phosphoserine. Residues 558-560 (RGD) carry the Cell attachment site motif.

It belongs to the PMEL/NMB family. As to expression, may be up-regulated in bone metastatic breast cancer cells.

Its subcellular location is the cell membrane. The protein localises to the melanosome membrane. It is found in the early endosome membrane. Its function is as follows. Could be a melanogenic enzyme. In Mus musculus (Mouse), this protein is Transmembrane glycoprotein NMB (Gpnmb).